A 552-amino-acid polypeptide reads, in one-letter code: Membrane protein insertase YidC (552 aa).

A helical membrane pass occupies residues 3–23 (IKRTVLWVIFFMSAVMLFDNW). Residues 36–59 (SATPTRTVGSAAPGTTTPGTQPAD) form a disordered region. The segment covering 42–59 (TVGSAAPGTTTPGTQPAD) has biased composition (low complexity). Helical transmembrane passes span 364-384 (WGWS…PLSA), 430-450 (FGGC…YWVL), and 504-524 (MMFM…GLVL).

Belongs to the OXA1/ALB3/YidC family. Type 1 subfamily. Interacts with the Sec translocase complex via SecD. Specifically interacts with transmembrane segments of nascent integral membrane proteins during membrane integration.

Its subcellular location is the cell inner membrane. Functionally, required for the insertion and/or proper folding and/or complex formation of integral membrane proteins into the membrane. Involved in integration of membrane proteins that insert both dependently and independently of the Sec translocase complex, as well as at least some lipoproteins. Aids folding of multispanning membrane proteins. The protein is Membrane protein insertase YidC of Paraburkholderia xenovorans (strain LB400).